A 271-amino-acid chain; its full sequence is Calretinin (271 aa).

6 EF-hand domains span residues 16–51 (LTAT…LEKA), 63–98 (NLGE…EENF), 107–142 (GSST…LLKK), 151–186 (KLQE…QENF), 195–230 (LTSE…LYEK), and 235–270 (MNIQ…SEPP). Positions 29, 31, 33, 35, 40, 76, 78, 80, 82, 87, 120, 122, 124, 126, 131, 164, 166, 168, 170, 175, 208, 210, 212, 214, and 219 each coordinate Ca(2+). Phosphotyrosine is present on Tyr214.

Belongs to the calbindin family.

The protein resides in the synapse. It localises to the cell projection. The protein localises to the dendrite. Calcium-binding protein involved in calcium homeostasis and signal transduction. It plays a critical role in buffering intracellular calcium levels and modulating calcium-dependent signaling pathways. Predominantly expressed in specific neuronal populations, influences synaptic plasticity and neuronal excitability, contributing to learning and memory. During embryonic development, it facilitates neuronal differentiation and maturation. The protein is Calretinin (CALB2) of Bos taurus (Bovine).